The primary structure comprises 473 residues: Mitochondrial distribution and morphology protein 10 (473 aa).

Belongs to the MDM10 family. As to quaternary structure, component of the ER-mitochondria encounter structure (ERMES) or MDM complex, composed of MMM1, MDM10, MDM12 and MDM34. Associates with the mitochondrial outer membrane sorting assembly machinery SAM(core) complex.

Its subcellular location is the mitochondrion outer membrane. In terms of biological role, component of the ERMES/MDM complex, which serves as a molecular tether to connect the endoplasmic reticulum and mitochondria. Components of this complex are involved in the control of mitochondrial shape and protein biogenesis and may function in phospholipid exchange. MDM10 is involved in the late assembly steps of the general translocase of the mitochondrial outer membrane (TOM complex). Functions in the TOM40-specific route of the assembly of outer membrane beta-barrel proteins, including the association of TOM40 with the receptor TOM22 and small TOM proteins. Can associate with the SAM(core) complex as well as the MDM12-MMM1 complex, both involved in late steps of the major beta-barrel assembly pathway, that is responsible for biogenesis of all outer membrane beta-barrel proteins. May act as a switch that shuttles between both complexes and channels precursor proteins into the TOM40-specific pathway. Plays a role in mitochondrial morphology and in the inheritance of mitochondria. The polypeptide is Mitochondrial distribution and morphology protein 10 (Candida albicans (strain WO-1) (Yeast)).